Here is a 327-residue protein sequence, read N- to C-terminus: Malate dehydrogenase (327 aa).

Position 11–17 (11–17 (GAAGNIS)) interacts with NAD(+). The substrate site is built by Arg92 and Arg98. NAD(+) contacts are provided by residues Asn105, Gln112, and 129–131 (VGN). Positions 131 and 162 each coordinate substrate. The Proton acceptor role is filled by His187. The interval 304–327 (SQEKMKATEQELSEERDAVEHLLP) is disordered.

It belongs to the LDH/MDH superfamily. MDH type 2 family.

It carries out the reaction (S)-malate + NAD(+) = oxaloacetate + NADH + H(+). Its function is as follows. Catalyzes the reversible oxidation of malate to oxaloacetate. This Psychrobacter sp. (strain PRwf-1) protein is Malate dehydrogenase.